We begin with the raw amino-acid sequence, 431 residues long: NADH-quinone oxidoreductase subunit D 2 (431 aa).

A disordered region spans residues 1–27 (MNDHKGLGGLDTEATPGSFGAGEPPRA).

It belongs to the complex I 49 kDa subunit family. As to quaternary structure, NDH-1 is composed of 14 different subunits. Subunits NuoB, C, D, E, F, and G constitute the peripheral sector of the complex.

The protein resides in the cell inner membrane. The catalysed reaction is a quinone + NADH + 5 H(+)(in) = a quinol + NAD(+) + 4 H(+)(out). Its function is as follows. NDH-1 shuttles electrons from NADH, via FMN and iron-sulfur (Fe-S) centers, to quinones in the respiratory chain. The immediate electron acceptor for the enzyme in this species is believed to be ubiquinone. Couples the redox reaction to proton translocation (for every two electrons transferred, four hydrogen ions are translocated across the cytoplasmic membrane), and thus conserves the redox energy in a proton gradient. The sequence is that of NADH-quinone oxidoreductase subunit D 2 from Anaeromyxobacter sp. (strain Fw109-5).